A 391-amino-acid polypeptide reads, in one-letter code: Phosphoglycerate kinase (391 aa).

Substrate contacts are provided by residues 21–23 (DLN), R36, 59–62 (HLGR), R113, and R146. Residues K197, E319, and 345 to 348 (GGDT) each bind ATP.

It belongs to the phosphoglycerate kinase family. Monomer.

It localises to the cytoplasm. The enzyme catalyses (2R)-3-phosphoglycerate + ATP = (2R)-3-phospho-glyceroyl phosphate + ADP. It participates in carbohydrate degradation; glycolysis; pyruvate from D-glyceraldehyde 3-phosphate: step 2/5. The polypeptide is Phosphoglycerate kinase (Shewanella woodyi (strain ATCC 51908 / MS32)).